The following is a 328-amino-acid chain: Phosphatidylglycerol--prolipoprotein diacylglyceryl transferase (328 aa).

A run of 3 helical transmembrane segments spans residues 15-35, 57-77, and 106-126; these read VIQGIPITWYSLSYILIILIS, IFMFSLVLGAILGGRLASTLV, and GMAIHGGFLGAIIAPLITINT. R156 contacts a 1,2-diacyl-sn-glycero-3-phospho-(1'-sn-glycerol). 2 helical membrane-spanning segments follow: residues 242–262 and 289–309; these read GFIFGVYVMLYAFFRFFIEYL and ISMGQILSLTLMLSGLIWIIV.

The protein belongs to the Lgt family.

The protein localises to the cell inner membrane. The catalysed reaction is L-cysteinyl-[prolipoprotein] + a 1,2-diacyl-sn-glycero-3-phospho-(1'-sn-glycerol) = an S-1,2-diacyl-sn-glyceryl-L-cysteinyl-[prolipoprotein] + sn-glycerol 1-phosphate + H(+). The protein operates within protein modification; lipoprotein biosynthesis (diacylglyceryl transfer). Catalyzes the transfer of the diacylglyceryl group from phosphatidylglycerol to the sulfhydryl group of the N-terminal cysteine of a prolipoprotein, the first step in the formation of mature lipoproteins. In Borreliella burgdorferi (strain ATCC 35210 / DSM 4680 / CIP 102532 / B31) (Borrelia burgdorferi), this protein is Phosphatidylglycerol--prolipoprotein diacylglyceryl transferase.